Reading from the N-terminus, the 503-residue chain is Zinc finger protein JACKDAW (503 aa).

Low complexity predominate over residues Ile32–Ser51. Residues Ile32–Val68 are disordered. Phosphoserine is present on Ser72. 2 consecutive C2H2-type zinc fingers follow at residues Phe82–His104 and Tyr124–His154. 2 consecutive short sequence motifs (nuclear localization signal) follow at residues His100–Pro107 and Ile146–Lys153. The C2H2-type 2; degenerate zinc-finger motif lies at Trp159–Gly182. Zn(2+) contacts are provided by Cys161, Cys164, His177, Cys181, Cys188, Cys190, His203, and Cys207. Residues Tyr186 to Ala209 form a CCHC-type 2; atypical zinc finger. An SHR-binding region spans residues Arg196 to Asp208. 2 disordered regions span residues Ser301–Met417 and Arg432–Ala465. A compositionally biased stretch (low complexity) spans Thr319–Ser358. Residues Met381–Pro392 show a composition bias toward polar residues. The span at Ala396 to Ala407 shows a compositional bias: low complexity. Residues Gly444 to Ala465 show a composition bias toward polar residues.

In terms of assembly, interacts with SHR, SCR, MGP and itself. The heterodimer with SHR involves its zinc fingers. Interacts with SIEL. Binds to RGA and SCL3 competitively in the nucleus. Expressed in the quiescent center, the ground tissue stem cells and to a lesser extent in mature cortex and endodermis cells.

The protein localises to the nucleus. Functionally, transcription factor that, together with BIB, regulates tissue boundaries and asymmetric cell division by a rapid up-regulation of 'SCARECROW' (SCR), thus controlling the nuclear localization of 'SHORT-ROOT' (SHR) and restricting its action. Binds DNA via its zinc fingers. Recognizes and binds to SCL3 promoter sequence 5'-AGACAA-3' to promote its expression when in complex with RGA. Confines CYCD6 expression to the cortex-endodermis initial/daughter (CEI/CEID) tissues. Required for radial patterning and stem cell maintenance. Counteracted by 'MAGPIE' (MGP). Binds to the SCR and MGP promoter sequences. Controls position-dependent signals that regulate epidermal-cell-type patterning. This Arabidopsis thaliana (Mouse-ear cress) protein is Zinc finger protein JACKDAW.